Consider the following 388-residue polypeptide: Staphopain A (388 aa).

Residues 1 to 25 form the signal peptide; it reads MKRNFPKLIALSLIFSLSVTPIANA. A propeptide spanning residues 26–214 is cleaved from the precursor; the sequence is ESNSNIKAKD…TSQFKSNNYT (189 aa). Active-site residues include Cys238, His334, and Asn355.

The protein belongs to the peptidase C47 family. As to quaternary structure, in the cytoplasm, prematurely activated/folded ScpA forms a stable non-covalent complex with ScpB. Cleavage leads to the activation of ScpA probably by an auto-catalytic manner.

The protein localises to the secreted. It carries out the reaction Broad endopeptidase action on proteins including elastin, but rather limited hydrolysis of small-molecule substrates. Assays are conveniently made with hemoglobin, casein or Z-Phe-Arg-NHMec as substrate.. With respect to regulation, prematurely activated/folded staphopain A is inhibited by staphostatin A (ScpB), which is probably required to protect staphylococcal cytoplasmic proteins from degradation by ScpA. In terms of biological role, cysteine protease that plays an important role in the inhibition of host innate immune response. Cleaves host elastins found in connective tissues, pulmonary surfactant protein A in the lungs, and the chemokine receptor CXCR2 on leukocytes. Proteolytic cleavage of surfactant protein A impairs bacterial phagocytosis by neutrophils while CXCR2 degradation blocks neutrophil activation and chemotaxis. Additionally, promotes vascular leakage by activating the plasma kallikerin/kinin system, resulting in hypotension. This is Staphopain A (sspP) from Staphylococcus aureus (strain COL).